The sequence spans 122 residues: Antitoxin protein TsiV3 (122 aa).

Positions 1 to 24 (MNNLLSAYVTMLLILLSISGGAIA) are cleaved as a signal peptide. Disulfide bonds link Cys-28–Cys-41 and Cys-82–Cys-100.

In terms of assembly, homodimer; dimerization is critical for inhibitory activity. Forms a heterotetramer with VgrG3 composed of one TsiV3 homodimer and two VgrG3 molecules.

Its function is as follows. Immunity protein that plays a role in preventing early activation of toxin VgrG3. The chain is Antitoxin protein TsiV3 from Vibrio cholerae serotype O1 (strain ATCC 39315 / El Tor Inaba N16961).